The following is a 246-amino-acid chain: tRNA (guanine-N(1)-)-methyltransferase (246 aa).

Residues Gly-112 and 131–136 each bind S-adenosyl-L-methionine; that span reads IGDYVL.

The protein belongs to the RNA methyltransferase TrmD family. As to quaternary structure, homodimer.

The protein localises to the cytoplasm. The catalysed reaction is guanosine(37) in tRNA + S-adenosyl-L-methionine = N(1)-methylguanosine(37) in tRNA + S-adenosyl-L-homocysteine + H(+). Its function is as follows. Specifically methylates guanosine-37 in various tRNAs. The chain is tRNA (guanine-N(1)-)-methyltransferase from Fervidobacterium nodosum (strain ATCC 35602 / DSM 5306 / Rt17-B1).